Consider the following 247-residue polypeptide: MADVSMRQMLEAGVHFGHQTRFWDPKMRPYIFGERNKIHIINLEKTLPLYKDALNFAGRLASNGGKILFVGTKRPARELVREHAARCGMPYVDHRWLGGMMTNFRTVKHSIARLKDLETQAEDGTFDKVTKREALALSREREKLDRSLSGIKNMERLPDAMFVVDVGYEHIAISEAKKLGIPVIGVVDTNCSPREVDYVIPGNDDAIRAIELYVSGIADAVIEAKQASSHAAAAGKDDFVEINDTAS.

It belongs to the universal ribosomal protein uS2 family.

This is Small ribosomal subunit protein uS2 from Halorhodospira halophila (strain DSM 244 / SL1) (Ectothiorhodospira halophila (strain DSM 244 / SL1)).